We begin with the raw amino-acid sequence, 146 residues long: uncharacterized protein (146 aa).

The HTH marR-type domain maps to 1–137 (MLSQEFFNSF…TINVMNQIHE (137 aa)).

This is an uncharacterized protein from Staphylococcus aureus (strain N315).